Consider the following 94-residue polypeptide: Large ribosomal subunit protein bL27 (94 aa).

Residues 1–9 (MLRLDLQFF) constitute a propeptide that is removed on maturation.

It belongs to the bacterial ribosomal protein bL27 family. The N-terminus is cleaved by ribosomal processing cysteine protease Prp.

The chain is Large ribosomal subunit protein bL27 from Bacillus pumilus (strain SAFR-032).